The following is a 240-amino-acid chain: UDP-2,3-diacylglucosamine hydrolase (240 aa).

Residues D8, H10, D41, N79, and H114 each contribute to the Mn(2+) site. Residue 79–80 (NR) coordinates substrate. The substrate site is built by D122, S160, N164, K167, and H195. Residues H195 and H197 each coordinate Mn(2+).

Belongs to the LpxH family. Requires Mn(2+) as cofactor.

Its subcellular location is the cell inner membrane. The enzyme catalyses UDP-2-N,3-O-bis[(3R)-3-hydroxytetradecanoyl]-alpha-D-glucosamine + H2O = 2-N,3-O-bis[(3R)-3-hydroxytetradecanoyl]-alpha-D-glucosaminyl 1-phosphate + UMP + 2 H(+). It functions in the pathway glycolipid biosynthesis; lipid IV(A) biosynthesis; lipid IV(A) from (3R)-3-hydroxytetradecanoyl-[acyl-carrier-protein] and UDP-N-acetyl-alpha-D-glucosamine: step 4/6. Functionally, hydrolyzes the pyrophosphate bond of UDP-2,3-diacylglucosamine to yield 2,3-diacylglucosamine 1-phosphate (lipid X) and UMP by catalyzing the attack of water at the alpha-P atom. Involved in the biosynthesis of lipid A, a phosphorylated glycolipid that anchors the lipopolysaccharide to the outer membrane of the cell. The protein is UDP-2,3-diacylglucosamine hydrolase of Serratia proteamaculans (strain 568).